The sequence spans 393 residues: Acetyl-CoA acetyltransferase (393 aa).

The active-site Acyl-thioester intermediate is the cysteine 88. Active-site proton acceptor residues include histidine 349 and cysteine 379.

The protein belongs to the thiolase-like superfamily. Thiolase family.

It is found in the cytoplasm. It catalyses the reaction 2 acetyl-CoA = acetoacetyl-CoA + CoA. The protein operates within metabolic intermediate biosynthesis; (R)-mevalonate biosynthesis; (R)-mevalonate from acetyl-CoA: step 1/3. This Pseudomonas aeruginosa (strain ATCC 15692 / DSM 22644 / CIP 104116 / JCM 14847 / LMG 12228 / 1C / PRS 101 / PAO1) protein is Acetyl-CoA acetyltransferase (atoB).